The chain runs to 115 residues: Basic leucine zipper transcriptional factor ATF-like (115 aa).

The interval 1–60 (MQQESDRNEQGYSSSPPSSNKQDSSDDTKKNHRREKNRIAAQKSRQRQTEKADSLHIESE) is disordered. Positions 13 to 22 (SSSPPSSNKQ) are enriched in low complexity. The region spanning 27–90 (DTKKNHRREK…KYLTCVLSTH (64 aa)) is the bZIP domain. The basic motif stretch occupies residues 29–51 (KKNHRREKNRIAAQKSRQRQTEK). Residues 47 to 60 (RQTEKADSLHIESE) show a composition bias toward basic and acidic residues. Residues 55–83 (LHIESENLERLNSALRGEISGLREELKYL) are leucine-zipper.

This sequence belongs to the bZIP family.

It localises to the nucleus. The protein resides in the cytoplasm. AP-1 family transcription factor that controls the differentiation of lineage-specific cells in the immune system: specifically mediates the differentiation of T-helper 17 cells (Th17), follicular T-helper cells (TfH), CD8(+) dendritic cells and class-switch recombination (CSR) in B-cells. This is Basic leucine zipper transcriptional factor ATF-like (batf) from Xenopus laevis (African clawed frog).